Here is a 101-residue protein sequence, read N- to C-terminus: Small ribosomal subunit protein uS10 (101 aa).

Belongs to the universal ribosomal protein uS10 family. In terms of assembly, part of the 30S ribosomal subunit.

In terms of biological role, involved in the binding of tRNA to the ribosomes. This chain is Small ribosomal subunit protein uS10, found in Mycoplasmopsis synoviae (strain 53) (Mycoplasma synoviae).